The chain runs to 117 residues: MVRMYETIVIVQPELGDDELKGLTAKVTDIIGSFKGVLHRLEDWGVRKLAYPVKKSVRGRYYYVRFDGDAPLIAELERRLRLDDKVLRYQSVKLEKEAAAPAPKAAPVESAPAVEAE.

Positions 96–117 (KEAAAPAPKAAPVESAPAVEAE) are disordered. The segment covering 99-117 (AAPAPKAAPVESAPAVEAE) has biased composition (low complexity).

This sequence belongs to the bacterial ribosomal protein bS6 family.

Functionally, binds together with bS18 to 16S ribosomal RNA. The protein is Small ribosomal subunit protein bS6 of Geobacter sulfurreducens (strain ATCC 51573 / DSM 12127 / PCA).